The sequence spans 913 residues: Sterol uptake control protein 2 (913 aa).

A DNA-binding region (zn(2)-C6 fungal-type) is located at residues G50–Y80. 2 disordered regions span residues G103–L173 and G216–S258. T122 is modified (phosphothreonine). Residues S150–N164 show a composition bias toward basic and acidic residues. Low complexity predominate over residues Q222 to Q241. Residues Q303 to V346 adopt a coiled-coil conformation. 2 disordered regions span residues L347–S385 and M453–S489. The span at L374–S385 shows a compositional bias: polar residues. Positions A440–S472 form a coiled coil. Positions Q454 to D468 are enriched in basic and acidic residues. Residues G469 to S487 are compositionally biased toward polar residues. S519 is subject to Phosphoserine. The segment covering E552–T562 has biased composition (polar residues). The interval E552–Q571 is disordered.

The protein resides in the nucleus. Its function is as follows. Transcription factor that is involved in activation of anaerobic genes such as DAN/TIR cell wall mannoprotein genes and YML083c. Appears to bind to anaerobic response elements (AR1) with the consensus sequence 5'-TCGTTYAG-3' present in the promoter regions of DAN/TIR genes. Involved in sterol uptake and regulation of the sterol biosynthesis. Binds to sterol regulatory elements (SRE) with the consensus sequence 5'-TCGTATA-3' present in ERG2 and ERG3 promoters. May be involved in down-regulation of CWP2 during anaerobic adaptation. This chain is Sterol uptake control protein 2 (UPC2), found in Saccharomyces cerevisiae (strain ATCC 204508 / S288c) (Baker's yeast).